Consider the following 39-residue polypeptide: Photosystem II reaction center protein J (39 aa).

Residues 7–27 traverse the membrane as a helical segment; the sequence is IPLWLVATVAGMGVITLLGIF.

This sequence belongs to the PsbJ family. In terms of assembly, PSII is composed of 1 copy each of membrane proteins PsbA, PsbB, PsbC, PsbD, PsbE, PsbF, PsbH, PsbI, PsbJ, PsbK, PsbL, PsbM, PsbT, PsbX, PsbY, PsbZ, Psb30/Ycf12, peripheral proteins PsbO, CyanoQ (PsbQ), PsbU, PsbV and a large number of cofactors. It forms dimeric complexes.

It is found in the cellular thylakoid membrane. Its function is as follows. One of the components of the core complex of photosystem II (PSII). PSII is a light-driven water:plastoquinone oxidoreductase that uses light energy to abstract electrons from H(2)O, generating O(2) and a proton gradient subsequently used for ATP formation. It consists of a core antenna complex that captures photons, and an electron transfer chain that converts photonic excitation into a charge separation. This chain is Photosystem II reaction center protein J, found in Cyanothece sp. (strain PCC 7425 / ATCC 29141).